The following is a 572-amino-acid chain: Probable pyruvate decarboxylase C186.09 (572 aa).

Substrate is bound by residues Asp38 and His125. The tract at residues 400 to 482 (DSWFGGMRIT…FLINNRGYTI (83 aa)) is thiamine pyrophosphate binding. Mg(2+) contacts are provided by Asp450, Asn477, and Gly479. Glu483 is a substrate binding site.

Belongs to the TPP enzyme family. In terms of assembly, homotetramer. Requires a metal cation as cofactor. It depends on thiamine diphosphate as a cofactor.

The catalysed reaction is a 2-oxocarboxylate + H(+) = an aldehyde + CO2. This chain is Probable pyruvate decarboxylase C186.09, found in Schizosaccharomyces pombe (strain 972 / ATCC 24843) (Fission yeast).